The sequence spans 627 residues: Glutamine--fructose-6-phosphate aminotransferase [isomerizing] (627 aa).

C2 (nucleophile; for GATase activity) is an active-site residue. A Glutamine amidotransferase type-2 domain is found at 2 to 224; that stretch reads CGIVGYIGTQ…NGEIARLTPL (223 aa). SIS domains lie at 293–442 and 476–617; these read LPEN…HRQT and LAHE…VDQP. The active-site For Fru-6P isomerization activity is the K622.

As to quaternary structure, homodimer.

The protein localises to the cytoplasm. The enzyme catalyses D-fructose 6-phosphate + L-glutamine = D-glucosamine 6-phosphate + L-glutamate. Functionally, catalyzes the first step in hexosamine metabolism, converting fructose-6P into glucosamine-6P using glutamine as a nitrogen source. The chain is Glutamine--fructose-6-phosphate aminotransferase [isomerizing] from Nostoc sp. (strain PCC 9229).